The sequence spans 94 residues: MLKMNLQFFASKKGVGSTKNGRDSISKRLGTKRADGQLVTGGSILVRQRGTRIYPGVNVGKGGDDTLFAKVDGVVKFERVGRDRKQVSVYPKAQ.

The propeptide occupies 1–9 (MLKMNLQFF).

This sequence belongs to the bacterial ribosomal protein bL27 family. Post-translationally, the N-terminus is cleaved by ribosomal processing cysteine protease Prp.

The polypeptide is Large ribosomal subunit protein bL27 (Halalkalibacterium halodurans (strain ATCC BAA-125 / DSM 18197 / FERM 7344 / JCM 9153 / C-125) (Bacillus halodurans)).